The following is a 319-amino-acid chain: Thiamine-monophosphate kinase (319 aa).

Aspartate 28, threonine 43, threonine 44, and aspartate 45 together coordinate Mg(2+). Histidine 52 provides a ligand contact to substrate. Aspartate 73 lines the Mg(2+) pocket. Residues tyrosine 104, 121–122, and arginine 145 contribute to the ATP site; that span reads GD. Aspartate 122 contacts Mg(2+). Aspartate 218 is a binding site for Mg(2+). Serine 220 provides a ligand contact to ATP. Aspartate 221 provides a ligand contact to Mg(2+). Residues glutamate 268 and tyrosine 315 each contribute to the substrate site.

The protein belongs to the thiamine-monophosphate kinase family.

It catalyses the reaction thiamine phosphate + ATP = thiamine diphosphate + ADP. The protein operates within cofactor biosynthesis; thiamine diphosphate biosynthesis; thiamine diphosphate from thiamine phosphate: step 1/1. In terms of biological role, catalyzes the ATP-dependent phosphorylation of thiamine-monophosphate (TMP) to form thiamine-pyrophosphate (TPP), the active form of vitamin B1. In Methanocaldococcus jannaschii (strain ATCC 43067 / DSM 2661 / JAL-1 / JCM 10045 / NBRC 100440) (Methanococcus jannaschii), this protein is Thiamine-monophosphate kinase.